A 577-amino-acid polypeptide reads, in one-letter code: Thiol:disulfide interchange protein DsbD (577 aa).

A signal peptide spans 1–23 (MAQRIFTLIFLLWTAVGTPQVAA). Disulfide bonds link Cys131–Cys137 and Cys194–Cys316. 7 helical membrane-spanning segments follow: residues 182 to 202 (ALLIGIGVAFTPCVLPMYPLI), 225 to 245 (YVQGMALTYTLLGLIVAAAGL), 255 to 275 (YILIGLSVMFIALALSMFGLY), 308 to 328 (LAGLICSPCTTAPLSAILLYI), 338 to 358 (GGTLYLYALGMGLPLILVTLF), 369 to 389 (WMQYVKEAFGFIILALPVFLL), and 396 to 416 (AWGIRLWSALGIAFFGWALML). The Thioredoxin domain occupies 437–577 (VISAKPLQDW…FQAHLQKFSP (141 aa)). Cysteines 492 and 495 form a disulfide.

Belongs to the thioredoxin family. DsbD subfamily.

It is found in the cell inner membrane. It carries out the reaction [protein]-dithiol + NAD(+) = [protein]-disulfide + NADH + H(+). It catalyses the reaction [protein]-dithiol + NADP(+) = [protein]-disulfide + NADPH + H(+). Required to facilitate the formation of correct disulfide bonds in some periplasmic proteins and for the assembly of the periplasmic c-type cytochromes. Acts by transferring electrons from cytoplasmic thioredoxin to the periplasm. This transfer involves a cascade of disulfide bond formation and reduction steps. The polypeptide is Thiol:disulfide interchange protein DsbD (Pectobacterium atrosepticum (strain SCRI 1043 / ATCC BAA-672) (Erwinia carotovora subsp. atroseptica)).